A 317-amino-acid chain; its full sequence is SVP1-like protein 2 (317 aa).

WD repeat units lie at residues 119 to 159 and 164 to 203; these read AHST…KMAE and VDHA…NAPY.

This sequence belongs to the WD repeat PROPPIN family.

It localises to the vacuole membrane. The protein localises to the cytoplasmic vesicle membrane. Functionally, involved in mitochondrial or peroxisomal functions and amino acid signaling pathways. In Emericella nidulans (strain FGSC A4 / ATCC 38163 / CBS 112.46 / NRRL 194 / M139) (Aspergillus nidulans), this protein is SVP1-like protein 2 (hsv2).